Consider the following 426-residue polypeptide: D-amino acid dehydrogenase (426 aa).

3 to 17 (VVVLGAGVIGVTTAW) provides a ligand contact to FAD.

This sequence belongs to the DadA oxidoreductase family. The cofactor is FAD.

The catalysed reaction is a D-alpha-amino acid + A + H2O = a 2-oxocarboxylate + AH2 + NH4(+). It functions in the pathway amino-acid degradation; D-alanine degradation; NH(3) and pyruvate from D-alanine: step 1/1. Oxidative deamination of D-amino acids. This chain is D-amino acid dehydrogenase, found in Phenylobacterium zucineum (strain HLK1).